A 231-amino-acid chain; its full sequence is 2-C-methyl-D-erythritol 4-phosphate cytidylyltransferase (231 aa).

This sequence belongs to the IspD/TarI cytidylyltransferase family. IspD subfamily.

It catalyses the reaction 2-C-methyl-D-erythritol 4-phosphate + CTP + H(+) = 4-CDP-2-C-methyl-D-erythritol + diphosphate. Its pathway is isoprenoid biosynthesis; isopentenyl diphosphate biosynthesis via DXP pathway; isopentenyl diphosphate from 1-deoxy-D-xylulose 5-phosphate: step 2/6. Functionally, catalyzes the formation of 4-diphosphocytidyl-2-C-methyl-D-erythritol from CTP and 2-C-methyl-D-erythritol 4-phosphate (MEP). This chain is 2-C-methyl-D-erythritol 4-phosphate cytidylyltransferase, found in Clostridium novyi (strain NT).